The following is an 89-amino-acid chain: Small ribosomal subunit protein uS15 (89 aa).

The protein belongs to the universal ribosomal protein uS15 family. Part of the 30S ribosomal subunit. Forms a bridge to the 50S subunit in the 70S ribosome, contacting the 23S rRNA.

In terms of biological role, one of the primary rRNA binding proteins, it binds directly to 16S rRNA where it helps nucleate assembly of the platform of the 30S subunit by binding and bridging several RNA helices of the 16S rRNA. Functionally, forms an intersubunit bridge (bridge B4) with the 23S rRNA of the 50S subunit in the ribosome. This Coxiella burnetii (strain CbuK_Q154) (Coxiella burnetii (strain Q154)) protein is Small ribosomal subunit protein uS15.